Here is a 213-residue protein sequence, read N- to C-terminus: Riboflavin/roseoflavin transporter RibM (213 aa).

The next 5 membrane-spanning stretches (helical) occupy residues histidine 15–phenylalanine 35, serine 38–glycine 58, isoleucine 107–tryptophan 129, tyrosine 136–alanine 158, and phenylalanine 171–methionine 193.

This sequence belongs to the nicotinamide ribonucleoside (NR) uptake permease (TC 4.B.1) family.

Its subcellular location is the cell membrane. Its function is as follows. Transports riboflavin and roseoflavin. Can also transport FMN and FAD. May confer roseoflavin resistance to S.davawensis, which naturally produces this antibiotic during stationary growth phase. In Streptomyces davaonensis (strain DSM 101723 / JCM 4913 / KCC S-0913 / 768), this protein is Riboflavin/roseoflavin transporter RibM.